The following is a 319-amino-acid chain: Acetyl-coenzyme A carboxylase carboxyl transferase subunit alpha (319 aa).

The region spanning 35–296 (NIDEEVHRLR…KAQLLEDLAD (262 aa)) is the CoA carboxyltransferase C-terminal domain.

It belongs to the AccA family. Acetyl-CoA carboxylase is a heterohexamer composed of biotin carboxyl carrier protein (AccB), biotin carboxylase (AccC) and two subunits each of ACCase subunit alpha (AccA) and ACCase subunit beta (AccD).

The protein localises to the cytoplasm. The enzyme catalyses N(6)-carboxybiotinyl-L-lysyl-[protein] + acetyl-CoA = N(6)-biotinyl-L-lysyl-[protein] + malonyl-CoA. The protein operates within lipid metabolism; malonyl-CoA biosynthesis; malonyl-CoA from acetyl-CoA: step 1/1. Its function is as follows. Component of the acetyl coenzyme A carboxylase (ACC) complex. First, biotin carboxylase catalyzes the carboxylation of biotin on its carrier protein (BCCP) and then the CO(2) group is transferred by the carboxyltransferase to acetyl-CoA to form malonyl-CoA. The polypeptide is Acetyl-coenzyme A carboxylase carboxyl transferase subunit alpha (Salmonella arizonae (strain ATCC BAA-731 / CDC346-86 / RSK2980)).